The following is a 693-amino-acid chain: MAKEFLIELGTEELPPTQLRTLAEAFAANFEAELKGAELTHEGVKWYAAPRRLALKVTALAEHQADKIVEKRGPAVSAAFDAEGNATKAAQGWARGCGITVDQAERMITDKGEWLLFKQEVKGQPTADIVVELAAKALAGLPIAKPMRWGNKTTQFIRPVKTLTMLMGSDLIQGEILGVASDRVIRGHRFMGEREFTIESAEQYPAILEERGKVMADYEMRKAIILADAQKAAAAIGGIADLEDDLVEEVTSLVEWPVVLTAKFEEEFLKVPAEALVYTMKGDQKYFPVYTEDKQLLPNFIFVSNIESKEPRYVIEGNEKVVRPRLADAEFFFNTDRKSKLIDRLPMLENAIFQQQLGTIKDKTDRITELAGYIAEQIGADVEKSKRAGLLAKCDLMTSMVFEFTDTQGVMGMHYARHDGEAEEVALALNEQYMPRFAGDDLPSNGVSAAVAMADKLDTIVGIFGIGQAPKGSDPFALRRASLGVLRIIVEYGYNLDLVDLVAKAKSLFAQQDGTSRLTNDNVEQEVIEFMLGRFRAWYQDEGFSVDIIQAVLARRPTKPADFDQRVKAVSHFRELEAAEALAAANKRVGNILAKFDGELAAEIDLALLQEDAEKVLAENVEVMTEALEPAFATGNYQEALSKLADLREPVDAFFDNVMVMADDEALKTNRLTLLNNLRNLFLQIADISLLQK.

The protein belongs to the class-II aminoacyl-tRNA synthetase family. Tetramer of two alpha and two beta subunits.

The protein resides in the cytoplasm. The catalysed reaction is tRNA(Gly) + glycine + ATP = glycyl-tRNA(Gly) + AMP + diphosphate. This is Glycine--tRNA ligase beta subunit from Vibrio vulnificus (strain YJ016).